The chain runs to 364 residues: N-acetyl-gamma-glutamyl-phosphate reductase (364 aa).

Cysteine 157 is a catalytic residue.

Belongs to the NAGSA dehydrogenase family. Type 1 subfamily.

It is found in the cytoplasm. It carries out the reaction N-acetyl-L-glutamate 5-semialdehyde + phosphate + NADP(+) = N-acetyl-L-glutamyl 5-phosphate + NADPH + H(+). The protein operates within amino-acid biosynthesis; L-arginine biosynthesis; N(2)-acetyl-L-ornithine from L-glutamate: step 3/4. Catalyzes the NADPH-dependent reduction of N-acetyl-5-glutamyl phosphate to yield N-acetyl-L-glutamate 5-semialdehyde. This Bifidobacterium animalis subsp. lactis (strain AD011) protein is N-acetyl-gamma-glutamyl-phosphate reductase.